Consider the following 93-residue polypeptide: Large ribosomal subunit protein uL23cz/uL23cy (93 aa).

Belongs to the universal ribosomal protein uL23 family. Part of the 50S ribosomal subunit.

It is found in the plastid. It localises to the chloroplast. In terms of biological role, binds to 23S rRNA. This chain is Large ribosomal subunit protein uL23cz/uL23cy (rpl23-A), found in Coffea arabica (Arabian coffee).